We begin with the raw amino-acid sequence, 143 residues long: 3-hydroxyacyl-[acyl-carrier-protein] dehydratase FabZ (143 aa).

Residue His48 is part of the active site.

Belongs to the thioester dehydratase family. FabZ subfamily.

The protein resides in the cytoplasm. It carries out the reaction a (3R)-hydroxyacyl-[ACP] = a (2E)-enoyl-[ACP] + H2O. In terms of biological role, involved in unsaturated fatty acids biosynthesis. Catalyzes the dehydration of short chain beta-hydroxyacyl-ACPs and long chain saturated and unsaturated beta-hydroxyacyl-ACPs. The chain is 3-hydroxyacyl-[acyl-carrier-protein] dehydratase FabZ from Roseiflexus sp. (strain RS-1).